Consider the following 156-residue polypeptide: MIYKAKLIDQTNKKIAIVASKFNDLIVKQLISGAQESLEMHGIDESNIDIIWVPGALEIPMVAKRIAQVQKYDGIVTLGAVIKGDTDHYDLVINGVANGISQISLSTDVPIVFGVLTTDTLEQAQQRSGAKSGNKGAEVALSLLELINIFEQIKSI.

Residues Phe22, 56–58, and 80–82 contribute to the 5-amino-6-(D-ribitylamino)uracil site; these read ALE and AVI. 85–86 provides a ligand contact to (2S)-2-hydroxy-3-oxobutyl phosphate; sequence DT. His88 serves as the catalytic Proton donor. Phe113 provides a ligand contact to 5-amino-6-(D-ribitylamino)uracil. Arg127 contributes to the (2S)-2-hydroxy-3-oxobutyl phosphate binding site.

The protein belongs to the DMRL synthase family.

It carries out the reaction (2S)-2-hydroxy-3-oxobutyl phosphate + 5-amino-6-(D-ribitylamino)uracil = 6,7-dimethyl-8-(1-D-ribityl)lumazine + phosphate + 2 H2O + H(+). The protein operates within cofactor biosynthesis; riboflavin biosynthesis; riboflavin from 2-hydroxy-3-oxobutyl phosphate and 5-amino-6-(D-ribitylamino)uracil: step 1/2. Its function is as follows. Catalyzes the formation of 6,7-dimethyl-8-ribityllumazine by condensation of 5-amino-6-(D-ribitylamino)uracil with 3,4-dihydroxy-2-butanone 4-phosphate. This is the penultimate step in the biosynthesis of riboflavin. The polypeptide is 6,7-dimethyl-8-ribityllumazine synthase (Leuconostoc mesenteroides subsp. mesenteroides (strain ATCC 8293 / DSM 20343 / BCRC 11652 / CCM 1803 / JCM 6124 / NCDO 523 / NBRC 100496 / NCIMB 8023 / NCTC 12954 / NRRL B-1118 / 37Y)).